Here is a 248-residue protein sequence, read N- to C-terminus: tRNA pseudouridine synthase A 2 (248 aa).

Catalysis depends on Asp-55, which acts as the Nucleophile. Tyr-113 lines the substrate pocket.

Belongs to the tRNA pseudouridine synthase TruA family. In terms of assembly, homodimer.

The enzyme catalyses uridine(38/39/40) in tRNA = pseudouridine(38/39/40) in tRNA. Formation of pseudouridine at positions 38, 39 and 40 in the anticodon stem and loop of transfer RNAs. This Clostridium tetani (strain Massachusetts / E88) protein is tRNA pseudouridine synthase A 2.